Here is a 190-residue protein sequence, read N- to C-terminus: Peptidyl-tRNA hydrolase (190 aa).

F14 contacts tRNA. H19 serves as the catalytic Proton acceptor. TRNA is bound by residues M64, N66, and N112.

This sequence belongs to the PTH family. As to quaternary structure, monomer.

The protein localises to the cytoplasm. It catalyses the reaction an N-acyl-L-alpha-aminoacyl-tRNA + H2O = an N-acyl-L-amino acid + a tRNA + H(+). Its function is as follows. Hydrolyzes ribosome-free peptidyl-tRNAs (with 1 or more amino acids incorporated), which drop off the ribosome during protein synthesis, or as a result of ribosome stalling. In terms of biological role, catalyzes the release of premature peptidyl moieties from peptidyl-tRNA molecules trapped in stalled 50S ribosomal subunits, and thus maintains levels of free tRNAs and 50S ribosomes. This is Peptidyl-tRNA hydrolase from Staphylococcus aureus (strain bovine RF122 / ET3-1).